Here is a 166-residue protein sequence, read N- to C-terminus: tRNA-acetylating toxin (166 aa).

The tract at residues 1–22 (MSGYSAPRRISDADDVTSFSSG) is disordered. The N-acetyltransferase domain maps to 1 to 162 (MSGYSAPRRI…LMLLMKDARA (162 aa)). Y138 is a catalytic residue.

The protein belongs to the acetyltransferase family. GNAT subfamily. In terms of assembly, homodimer, forms a complex with cognate antitoxin TacA.

The enzyme catalyses glycyl-tRNA(Gly) + acetyl-CoA = N-acetylglycyl-tRNA(Gly) + CoA + H(+). Toxic component of a type II toxin-antitoxin (TA) system. Overexpression of this gene alone in M.smegmatis inhibits growth, while overexpression of the tacA-tacT operon does not. Acetylates glycyl-tRNA(Gly) but not other tRNAs, blocks in vitro translation in the presence, but not absence, of acetyl-coenzyme A. Peptidyl-tRNA hydrolase (pth) counteracts the product of this enzyme in vitro. Neutralized by cognate antitoxin TacA. Does not seem to be active in laboratory growth conditions. In terms of biological role, tacA-TacT both represses and derepresses expression of its own operon. In Mycobacterium tuberculosis (strain ATCC 25618 / H37Rv), this protein is tRNA-acetylating toxin.